The primary structure comprises 434 residues: E3 ubiquitin-protein transferase MAEA (434 aa).

The extracellular and involved in cell to cell contact stretch occupies residues 1 to 124 (MAVQESAAQL…AAASVWKRKR (124 aa)). Threonine 28 carries the post-translational modification Phosphothreonine. The region spanning 121 to 153 (KRKRMDRMMVEHLLRCGYYNTAVKLARQSGIED) is the LisH domain. Positions 159–254 (MFLTAKEVEE…ELIRQNKRLD (96 aa)) constitute a CTLH domain. The segment at 190–222 (RKMKGRQSEHDAKTGRKSRVASGSPKESEDLGM) is disordered. The RING-Gid-type zinc-finger motif lies at 352–419 (CPVCSRSLNK…QDDKVVCPRT (68 aa)).

Identified in the CTLH complex that contains GID4, RANBP9 and/or RANBP10, MKLN1, MAEA, RMND5A (or alternatively its paralog RMND5B), GID8, ARMC8, WDR26 and YPEL5. Within this complex, MAEA, RMND5A (or alternatively its paralog RMND5B), GID8, WDR26, and RANBP9 and/or RANBP10 form the catalytic core, while GID4, MKLN1, ARMC8 and YPEL5 have ancillary roles. Interacts with F-actin. Autoubiquitinated as component of the CTLH E3 ubiquitin-protein ligase complex (in vitro).

It localises to the cytoplasm. It is found in the nucleus. The protein resides in the nucleoplasm. Its subcellular location is the nucleus matrix. The protein localises to the cell membrane. It localises to the cytoskeleton. The catalysed reaction is S-ubiquitinyl-[E2 ubiquitin-conjugating enzyme]-L-cysteine + [acceptor protein]-L-lysine = [E2 ubiquitin-conjugating enzyme]-L-cysteine + N(6)-ubiquitinyl-[acceptor protein]-L-lysine.. In terms of biological role, core component of the CTLH E3 ubiquitin-protein ligase complex that selectively accepts ubiquitin from UBE2H and mediates ubiquitination and subsequent proteasomal degradation of the transcription factor HBP1. MAEA and RMND5A are both required for catalytic activity of the CTLH E3 ubiquitin-protein ligase complex. MAEA is required for normal cell proliferation. The CTLH E3 ubiquitin-protein ligase complex is not required for the degradation of enzymes involved in gluconeogenesis, such as FBP1. Plays a role in erythroblast enucleation during erythrocyte maturation and in the development of mature macrophages. Mediates the attachment of erythroid cell to mature macrophages; this MAEA-mediated contact inhibits erythroid cell apoptosis. Participates in erythroblastic island formation, which is the functional unit of definitive erythropoiesis. Associates with F-actin to regulate actin distribution in erythroblasts and macrophages. May contribute to nuclear architecture and cells division events. The protein is E3 ubiquitin-protein transferase MAEA (MAEA) of Bos taurus (Bovine).